A 445-amino-acid chain; its full sequence is Lipid A 1-phosphatase (445 aa).

The N-terminal stretch at methionine 1 to alanine 22 is a signal peptide.

The protein resides in the periplasm. The protein operates within bacterial outer membrane biogenesis; LPS lipid A biosynthesis. Its function is as follows. Removes the 1-phosphate group from lipid A species. Absence of phosphate groups in lipid A renders the bacteria resistant to host-derived cationic antimicrobial peptides (CAMP) and allowing it to camouflage itself from the host innate immune response. The chain is Lipid A 1-phosphatase from Porphyromonas gingivalis (strain ATCC 33277 / DSM 20709 / CIP 103683 / JCM 12257 / NCTC 11834 / 2561).